An 875-amino-acid chain; its full sequence is Alanine--tRNA ligase (875 aa).

The disordered stretch occupies residues 426-445; it reads ERSRKNTVKNKNDSDSIFQD. His561, His565, Cys663, and His667 together coordinate Zn(2+).

The protein belongs to the class-II aminoacyl-tRNA synthetase family. The cofactor is Zn(2+).

The protein resides in the cytoplasm. It catalyses the reaction tRNA(Ala) + L-alanine + ATP = L-alanyl-tRNA(Ala) + AMP + diphosphate. Functionally, catalyzes the attachment of alanine to tRNA(Ala) in a two-step reaction: alanine is first activated by ATP to form Ala-AMP and then transferred to the acceptor end of tRNA(Ala). Also edits incorrectly charged Ser-tRNA(Ala) and Gly-tRNA(Ala) via its editing domain. In Chlamydia muridarum (strain MoPn / Nigg), this protein is Alanine--tRNA ligase.